Here is a 198-residue protein sequence, read N- to C-terminus: Recombination protein RecR (198 aa).

A C4-type zinc finger spans residues 57–72; it reads CRVCANIADENPCGIC. One can recognise a Toprim domain in the interval 80–175; the sequence is GLICVVERPR…RVTRLAFGLP (96 aa).

Belongs to the RecR family.

Functionally, may play a role in DNA repair. It seems to be involved in an RecBC-independent recombinational process of DNA repair. It may act with RecF and RecO. The polypeptide is Recombination protein RecR (Desulforudis audaxviator (strain MP104C)).